We begin with the raw amino-acid sequence, 450 residues long: NADH-ubiquinone oxidoreductase chain 2 (450 aa).

Transmembrane regions (helical) follow at residues 25 to 45 (GTIT…IVAM), 58 to 78 (LTPY…MLLM), 90 to 110 (SPFY…FPLV), 113 to 133 (LIAL…LTGL), 145 to 165 (LLYF…SYFV), 186 to 206 (AFDY…MAPL), 219 to 239 (TYIT…WIFA), 248 to 268 (VTIL…LFQV), 272 to 292 (TMLA…MMSY), 295 to 315 (AFYI…LGML), 344 to 364 (LAFS…TPGF), 385 to 405 (AIVV…KVLF), and 414 to 436 (NFIN…SFFM).

The protein belongs to the complex I subunit 2 family.

The protein localises to the mitochondrion inner membrane. The enzyme catalyses a ubiquinone + NADH + 5 H(+)(in) = a ubiquinol + NAD(+) + 4 H(+)(out). In terms of biological role, core subunit of the mitochondrial membrane respiratory chain NADH dehydrogenase (Complex I) that is believed to belong to the minimal assembly required for catalysis. Complex I functions in the transfer of electrons from NADH to the respiratory chain. The immediate electron acceptor for the enzyme is believed to be ubiquinone. In Debaryomyces hansenii (strain ATCC 36239 / CBS 767 / BCRC 21394 / JCM 1990 / NBRC 0083 / IGC 2968) (Yeast), this protein is NADH-ubiquinone oxidoreductase chain 2 (ND2).